Consider the following 285-residue polypeptide: (2Z,6Z)-farnesyl diphosphate synthase CPT6, chloroplastic (285 aa).

The transit peptide at 1–30 (MNSLFVGRPIVKSSYNVYTLPSSICGGHFF) directs the protein to the chloroplast. Aspartate 65 is a catalytic residue.

Belongs to the UPP synthase family. Requires Mg(2+) as cofactor. As to expression, expressed in roots and red fruits.

Its subcellular location is the plastid. The protein resides in the chloroplast. The catalysed reaction is 2 isopentenyl diphosphate + dimethylallyl diphosphate = (2Z,6Z)-farnesyl diphosphate + 2 diphosphate. The enzyme catalyses isopentenyl diphosphate + dimethylallyl diphosphate = neryl diphosphate + diphosphate. It carries out the reaction neryl diphosphate + isopentenyl diphosphate = (2Z,6Z)-farnesyl diphosphate + diphosphate. Uses neryl diphosphate to catalyze the cis-prenyl chain elongation and produce the 15 carbon product (2Z,6Z)-farnesyl diphosphate. This chain is (2Z,6Z)-farnesyl diphosphate synthase CPT6, chloroplastic, found in Solanum lycopersicum (Tomato).